Here is a 475-residue protein sequence, read N- to C-terminus: Probable proline--tRNA ligase, mitochondrial (475 aa).

Residues 1–29 constitute a mitochondrion transit peptide; it reads MEGLLTRCRTLSALAACSLRHCRYIIHKC.

This sequence belongs to the class-II aminoacyl-tRNA synthetase family.

It localises to the mitochondrion matrix. It catalyses the reaction tRNA(Pro) + L-proline + ATP = L-prolyl-tRNA(Pro) + AMP + diphosphate. In terms of biological role, mitochondrial aminoacyl-tRNA synthetase that catalyzes the specific attachment of the proline amino acid (aa) to the homologous transfer RNA (tRNA), further participating in protein synthesis. The reaction occurs in a two steps: proline is first activated by ATP to form Pro-AMP and then transferred to the acceptor end of tRNA(Pro). This Mus musculus (Mouse) protein is Probable proline--tRNA ligase, mitochondrial (Pars2).